Consider the following 88-residue polypeptide: MTEELVNHLFEAIVVENVKRANANMAEPYNHSVYKFHEDRIDRLVTTLADGNEALRDQFYEALFDITWDGVAWAKKVFAEISRDIAEG.

The chain is Gene 85 protein (85) from Mycobacterium phage L5 (Mycobacteriophage L5).